The chain runs to 255 residues: uncharacterized protein (255 aa).

The a divalent metal cation site is built by His-6, His-8, Glu-92, His-128, His-153, and Asp-203.

It belongs to the metallo-dependent hydrolases superfamily. TatD-type hydrolase family. Requires a divalent metal cation as cofactor.

This is an uncharacterized protein from Bacillus subtilis (strain 168).